Consider the following 63-residue polypeptide: Large ribosomal subunit protein uL29 (63 aa).

Belongs to the universal ribosomal protein uL29 family.

This chain is Large ribosomal subunit protein uL29, found in Colwellia psychrerythraea (strain 34H / ATCC BAA-681) (Vibrio psychroerythus).